A 217-amino-acid chain; its full sequence is Ras-related protein RABA1f (217 aa).

20–27 (GDSGVGKS) serves as a coordination point for GTP. The Effector region motif lies at 42-50 (SKSTIGVEF). Residues 68-72 (DTAGQ), 126-129 (NKAD), and 156-157 (SA) each bind GTP. S-geranylgeranyl cysteine attachment occurs at residues Cys214 and Cys215.

It belongs to the small GTPase superfamily. Rab family.

Its subcellular location is the cell membrane. Intracellular vesicle trafficking and protein transport. The chain is Ras-related protein RABA1f (RABA1F) from Arabidopsis thaliana (Mouse-ear cress).